We begin with the raw amino-acid sequence, 1521 residues long: Lysophospholipase NTE1 (1521 aa).

At 1 to 50 (MDVVNSTARAAVTSATAVTAVTGTGDRHPNPLSSAVAAASDVANAHGSSS) the chain is on the cytoplasmic side. A helical membrane pass occupies residues 51 to 71 (WLGLFARVVLWLLQFVSMVLY). Residues 72–96 (YAIKLATISVPTLLYTLFSTSLTVT) lie on the Lumenal side of the membrane. A helical transmembrane segment spans residues 97 to 117 (MNATTLMLIVAAMIGAISWVV). Residues 118–1521 (RYRYLNMYSR…RTMAPRRASI (1404 aa)) lie on the Cytoplasmic side of the membrane. Disordered stretches follow at residues 280 to 301 (HADEDNSEPGTTTHSGLFPNYP), 315 to 372 (SVPN…SAHP), and 738 to 768 (HAMDSAQSIRSPQRSPQPFAESMRSGNKVDD). Composition is skewed to polar residues over residues 316-334 (VPNTPQMDASASSSANNLP) and 738-753 (HAMDSAQSIRSPQRSP). Residues 670-789 (PASP…GGLA) and 837-957 (RLTN…IASR) contribute to the a nucleoside 3',5'-cyclic phosphate site. The region spanning 1217–1381 (LVLGGGGARG…VDNLTVSHMK (165 aa)) is the PNPLA domain. The GXGXXG signature appears at 1221-1226 (GGGARG). The GXSXG signature appears at 1248–1252 (GTSIG). The Nucleophile role is filled by serine 1250. Aspartate 1368 functions as the Proton acceptor in the catalytic mechanism. A DGA/G motif is present at residues 1368 to 1370 (DGG).

This sequence belongs to the NTE family.

Its subcellular location is the endoplasmic reticulum membrane. It carries out the reaction a 1-acyl-sn-glycero-3-phosphocholine + H2O = sn-glycerol 3-phosphocholine + a fatty acid + H(+). Inhibited by organophosphorus esters. Intracellular phospholipase B that catalyzes the double deacylation of phosphatidylcholine (PC) to glycerophosphocholine (GroPCho). Plays an important role in membrane lipid homeostasis. Responsible for the rapid PC turnover in response to inositol, elevated temperatures, or when choline is present in the growth medium. The protein is Lysophospholipase NTE1 (NTE1) of Chaetomium globosum (strain ATCC 6205 / CBS 148.51 / DSM 1962 / NBRC 6347 / NRRL 1970) (Soil fungus).